The following is a 351-amino-acid chain: uncharacterized protein (351 aa).

The segment at 25 to 67 (KKAETETLPPANSQPAAPAPEAKPTEAPVAKAEAKPETPAQPV) is disordered. Over residues 33–55 (PPANSQPAAPAPEAKPTEAPVAK) the composition is skewed to low complexity.

This is an uncharacterized protein from Escherichia coli (strain K12).